Consider the following 1012-residue polypeptide: Roundabout homolog 4 (1012 aa).

The first 27 residues, 1–27, serve as a signal peptide directing secretion; sequence MGSGGTGLLGTEWPLPLLLLFIMGGEA. Ig-like C2-type domains lie at 32-132 and 138-225; these read PQIL…ARLS and EDFQ…ARVS. 2 cysteine pairs are disulfide-bonded: Cys53–Cys115 and Cys159–Cys208. 2 N-linked (GlcNAc...) asparagine glycosylation sites follow: Asn201 and Asn247. Fibronectin type-III domains lie at 249-346 and 348-443; these read TLLN…LPEQ and PSAP…LEQA. N-linked (GlcNAc...) asparagine glycosylation is found at Asn361, Asn390, and Asn397. 2 disordered regions span residues 533 to 553 and 586 to 616; these read TSGSRDLSSSSSLSSRLGLDP and LIAEQPSSPPVRPSPKTPAARRFPSKLAGTS. Low complexity predominate over residues 534–550; the sequence is SGSRDLSSSSSLSSRLG. Pro residues predominate over residues 592 to 601; the sequence is SSPPVRPSPK. N-linked (GlcNAc...) asparagine glycosylation is found at Asn681 and Asn713. The disordered stretch occupies residues 711 to 801; the sequence is HRNSSELASR…LEEEEDQDSV (91 aa). Positions 745–759 are enriched in low complexity; sequence LQAPSSDPLPAAPLS. A compositionally biased stretch (polar residues) spans 760–771; that stretch reads VLNSSRPSSPQA. 2 N-linked (GlcNAc...) asparagine glycosylation sites follow: Asn762 and Asn783. Residues 772–791 show a composition bias toward low complexity; the sequence is SFLSCPSPSSSNLSSSSLSS. Residues Ser814 and Ser947 each carry the phosphoserine modification. Positions 980-1012 are disordered; the sequence is RLGRGLPPWPPDSRASSQRSWLTGAVPKAGDSS.

Belongs to the immunoglobulin superfamily. ROBO family. As to quaternary structure, interacts with SLIT2 and ENAH. In terms of tissue distribution, expressed specifically in embryo and adult vascular endothelium.

Receptor for Slit proteins, at least for SLIT2, and seems to be involved in angiogenesis and vascular patterning. May mediate the inhibition of primary endothelial cell migration by Slit proteins. Involved in the maintenance of endothelial barrier organization and function. This is Roundabout homolog 4 (Robo4) from Mus musculus (Mouse).